The chain runs to 865 residues: AP-1 complex subunit gamma-1 (865 aa).

Residues 665–690 are disordered; the sequence is AEPLETPVDEMTQSPQSSLSRAPSTS. Positions 675-690 are enriched in polar residues; that stretch reads MTQSPQSSLSRAPSTS. Positions 746 to 860 constitute a GAE domain; that stretch reads KSYPPIVVFD…LDQVDFGKLP (115 aa).

The protein belongs to the adaptor complexes large subunit family. Adaptor protein complex 1 (AP-1) is a heterotetramer composed of two large adaptins (gamma-type subunit apl4 and beta-type subunit apl2), a medium adaptin (mu-type subunit apm1) and a small adaptin (sigma-type subunit aps1). AP-1 interacts with clathrin.

It is found in the cytoplasmic vesicle. The protein resides in the clathrin-coated vesicle membrane. The protein localises to the golgi apparatus. Adaptins are components of the adaptor complexes which link clathrin to receptors in coated vesicles. Clathrin-associated protein complexes are believed to interact with the cytoplasmic tails of membrane proteins, leading to their selection and concentration. The AP-1 complex interacts directly with clathrin. The sequence is that of AP-1 complex subunit gamma-1 (apl4) from Schizosaccharomyces pombe (strain 972 / ATCC 24843) (Fission yeast).